Consider the following 276-residue polypeptide: Diaminopimelate epimerase (276 aa).

The substrate site is built by N13, Q46, and N66. The active-site Proton donor is the C75. Substrate is bound by residues G76–N77, N159, N192, and E210–R211. C219 serves as the catalytic Proton acceptor. Substrate is bound at residue G220 to T221.

This sequence belongs to the diaminopimelate epimerase family. Homodimer.

It is found in the cytoplasm. It carries out the reaction (2S,6S)-2,6-diaminopimelate = meso-2,6-diaminopimelate. The protein operates within amino-acid biosynthesis; L-lysine biosynthesis via DAP pathway; DL-2,6-diaminopimelate from LL-2,6-diaminopimelate: step 1/1. Functionally, catalyzes the stereoinversion of LL-2,6-diaminopimelate (L,L-DAP) to meso-diaminopimelate (meso-DAP), a precursor of L-lysine and an essential component of the bacterial peptidoglycan. The chain is Diaminopimelate epimerase from Cellvibrio japonicus (strain Ueda107) (Pseudomonas fluorescens subsp. cellulosa).